The chain runs to 780 residues: Protein phosphatase 1 regulatory subunit 21 (780 aa).

Coiled-coil stretches lie at residues 1–207 and 556–607; these read MASA…LKTL and ESRE…LKNT. The tract at residues 84–104 is disordered; the sequence is EPRGKKNKKSGESSSQLSQEQ. Over residues 95 to 104 the composition is skewed to low complexity; sequence ESSSQLSQEQ. Position 652 is a phosphothreonine (Thr-652). The stretch at 693–742 forms a coiled coil; it reads YAECRALSKRLALAEKSKEALTEEMKLASQNISRLQDELTTTKRSYEDQL. Residues 760–780 form a disordered region; that stretch reads REEIDTLKMSSKGNSKKNKSR.

In terms of assembly, component of the FERRY complex, composed of five subunits: TBCK, PPP1R21, FERRY3, CRYZL1 and GATAD1, with a ratio of 1:2:1:2:4 respectively. PPP1R21 serves as a binding hub connecting all five complex subunits to mediate the binding to specific mitochondrial mRNAs. Interacts with the GTP-bound form of RAB5A (via its C-terminal region); linking the mRNP complex onto trafficking endosomes for active mRNA transport. Interacts with PPP1CA.

The protein localises to the early endosome. Component of the FERRY complex (Five-subunit Endosomal Rab5 and RNA/ribosome intermediary). The FERRY complex directly interacts with mRNAs and RAB5A, and functions as a RAB5A effector involved in the localization and the distribution of specific mRNAs most likely by mediating their endosomal transport. The complex recruits mRNAs and ribosomes to early endosomes through direct mRNA-interaction. In the complex, PPP1R21 serves as a binding hub connecting all five complex subunits and mediating the binding to mRNA and early endosomes via RAB5A. Putative regulator of protein phosphatase 1 (PP1) activity. May play a role in the endosomal sorting process or in endosome maturation pathway. The protein is Protein phosphatase 1 regulatory subunit 21 (PPP1R21) of Homo sapiens (Human).